The sequence spans 355 residues: Protein-tyrosine sulfotransferase 1 (355 aa).

Residues 1-8 are Cytoplasmic-facing; the sequence is MIGKLKQN. The chain crosses the membrane as a helical; Signal-anchor for type II membrane protein span at residues 9-25; sequence LLVACLVISSVTVFYLC. The Lumenal segment spans residues 26-355; it reads RHAMDCHHRI…QKSPEKPNPS (330 aa). The N-linked (GlcNAc...) asparagine glycan is linked to Asn-55. 76–80 serves as a coordination point for 3'-phosphoadenylyl sulfate; it reads RSGTT. Cys-94 and Cys-154 are joined by a disulfide. The Proton donor/acceptor role is filled by Glu-97. The interaction with peptide substrate stretch occupies residues 99-103; sequence RVIPR. Positions 181, 189, and 193 each coordinate 3'-phosphoadenylyl sulfate. Cysteines 223 and 230 form a disulfide. 3'-phosphoadenylyl sulfate is bound by residues Tyr-235, 282–291, and Lys-297; that span reads STDQVIKPVN. Positions 325-355 are disordered; that stretch reads HANPPNYGRPDPLVLDNTRRLQKSPEKPNPS. Basic and acidic residues predominate over residues 341 to 355; sequence NTRRLQKSPEKPNPS.

Belongs to the protein sulfotransferase family.

Its subcellular location is the golgi apparatus membrane. It catalyses the reaction L-tyrosyl-[protein] + 3'-phosphoadenylyl sulfate = O-sulfo-L-tyrosine-[protein] + adenosine 3',5'-bisphosphate + H(+). In terms of biological role, catalyzes the O-sulfation of tyrosine residues within acidic motifs of polypeptides, using 3'-phosphoadenylyl sulfate (PAPS) as cosubstrate. The sequence is that of Protein-tyrosine sulfotransferase 1 (tpst1) from Danio rerio (Zebrafish).